The chain runs to 185 residues: UPF0215 protein APE_0476.1 (185 aa).

The protein belongs to the UPF0215 family.

This Aeropyrum pernix (strain ATCC 700893 / DSM 11879 / JCM 9820 / NBRC 100138 / K1) protein is UPF0215 protein APE_0476.1.